The following is a 393-amino-acid chain: S-adenosylmethionine synthase 2 (393 aa).

Glutamate 9 provides a ligand contact to Mg(2+). An ATP-binding site is contributed by histidine 15. Glutamate 43 is a K(+) binding site. Positions 56 and 99 each coordinate L-methionine. ATP is bound by residues 167 to 169 (DGK), 235 to 238 (SGRF), aspartate 246, 252 to 253 (RK), alanine 269, lysine 273, and lysine 277. An L-methionine-binding site is contributed by aspartate 246. An L-methionine-binding site is contributed by lysine 277.

It belongs to the AdoMet synthase family. In terms of assembly, homotetramer. It depends on Mn(2+) as a cofactor. The cofactor is Mg(2+). Requires Co(2+) as cofactor. K(+) is required as a cofactor.

Its subcellular location is the cytoplasm. The enzyme catalyses L-methionine + ATP + H2O = S-adenosyl-L-methionine + phosphate + diphosphate. Its pathway is amino-acid biosynthesis; S-adenosyl-L-methionine biosynthesis; S-adenosyl-L-methionine from L-methionine: step 1/1. Its function is as follows. Catalyzes the formation of S-adenosylmethionine from methionine and ATP. The reaction comprises two steps that are both catalyzed by the same enzyme: formation of S-adenosylmethionine (AdoMet) and triphosphate, and subsequent hydrolysis of the triphosphate. This is S-adenosylmethionine synthase 2 (SAMS2) from Elaeagnus umbellata (Autumn olive).